The following is a 781-amino-acid chain: Putative amine oxidase [copper-containing] (781 aa).

Positions 1-34 (MSLPKTANGMDKLKLCYLLLFYLGSSSLTEVSGA) are cleaved as a signal peptide. The cysteines at positions 199 and 203 are disulfide-linked. 385–395 (FFDSSYMIGMN) lines the substrate pocket. D387 serves as the catalytic Proton acceptor. A disulfide bridge connects residues C405 and C432. A substrate-binding site is contributed by 472–477 (IANYDY). The active-site Schiff-base intermediate with substrate; via topaquinone is Y475. A 2',4',5'-topaquinone modification is found at Y475. Cu cation-binding residues include H525 and H527. D534, D536, E579, F671, D674, E676, D682, and L683 together coordinate Ca(2+). The Mn(2+) site is built by D534 and D536. D682 serves as a coordination point for Mn(2+). Position 693 (H693) interacts with Cu cation.

It belongs to the copper/topaquinone oxidase family. As to quaternary structure, homodimer. Cu cation is required as a cofactor. Requires Ca(2+) as cofactor. L-topaquinone serves as cofactor. The cofactor is Mn(2+). Post-translationally, topaquinone (TPQ) is generated by copper-dependent autoxidation of a specific tyrosyl residue. As to expression, prismatic layer of shell (at protein level). Expressed primarily in the mantle with highest level in the mantle edge and lower level in the mantle pallium.

The protein resides in the secreted. In Margaritifera margaritifera (Freshwater pearl mussel), this protein is Putative amine oxidase [copper-containing].